The chain runs to 249 residues: Phosphate import ATP-binding protein PstB 3 (249 aa).

One can recognise an ABC transporter domain in the interval 4-244 (LVINNLDLYY…PQDERTENYI (241 aa)). ATP is bound at residue 36 to 43 (GPSGCGKS).

The protein belongs to the ABC transporter superfamily. Phosphate importer (TC 3.A.1.7) family. In terms of assembly, the complex is composed of two ATP-binding proteins (PstB), two transmembrane proteins (PstC and PstA) and a solute-binding protein (PstS).

It localises to the cell membrane. The enzyme catalyses phosphate(out) + ATP + H2O = ADP + 2 phosphate(in) + H(+). In terms of biological role, part of the ABC transporter complex PstSACB involved in phosphate import. Responsible for energy coupling to the transport system. In Streptococcus agalactiae serotype Ia (strain ATCC 27591 / A909 / CDC SS700), this protein is Phosphate import ATP-binding protein PstB 3.